Reading from the N-terminus, the 481-residue chain is Tripartite motif-containing protein 10 (481 aa).

The RING-type zinc finger occupies 16–61; that stretch reads CPICQGTLREPVTIDCGHNFCRACLTRYCEIPGPDLEESPTCPLCK. Residues 94 to 135 form a B box-type zinc finger; sequence GEEDVCQEHGEKIYFFCEDDEMQLCVVCREAGEHATHTMRFL. Positions 99, 102, 121, and 127 each coordinate Zn(2+). The stretch at 150–177 forms a coiled coil; that stretch reads LKCLRKEREEIQEIQSRENKRMQVLLTQ. A B30.2/SPRY domain is found at 292 to 481; it reads REMKMFLEKL…GRGSSFSLSS (190 aa).

This sequence belongs to the TRIM/RBCC family. In terms of assembly, interacts with IFNAR1; this interaction prevents association of IFNAR1 with TYK2.

The protein resides in the cytoplasm. Functionally, E3 ligase that plays an essential role in the differentiation and survival of terminal erythroid cells. May directly bind to PTEN and promote its ubiquitination, resulting in its proteasomal degradation and activation of hypertrophic signaling. In addition, plays a role in immune response regulation by repressing the phosphorylation of STAT1 and STAT2 in the interferon/JAK/STAT signaling pathway independent of its E3 ligase activity. Mechanistically, interacts with the intracellular domain of IFNAR1 and thereby inhibits the association between TYK2 and IFNAR1. In Homo sapiens (Human), this protein is Tripartite motif-containing protein 10 (TRIM10).